The following is a 173-amino-acid chain: NADH-ubiquinone oxidoreductase chain 6 (173 aa).

Helical transmembrane passes span 1–21, 25–45, 53–73, 82–102, and 141–161; these read MVYF…AVAS, PYFA…LLVG, LVLF…TAAL, WGDW…FFVG, and GIML…ILEL.

It belongs to the complex I subunit 6 family.

It is found in the mitochondrion membrane. It catalyses the reaction a ubiquinone + NADH + 5 H(+)(in) = a ubiquinol + NAD(+) + 4 H(+)(out). In terms of biological role, core subunit of the mitochondrial membrane respiratory chain NADH dehydrogenase (Complex I) that is believed to belong to the minimal assembly required for catalysis. Complex I functions in the transfer of electrons from NADH to the respiratory chain. The immediate electron acceptor for the enzyme is believed to be ubiquinone. This chain is NADH-ubiquinone oxidoreductase chain 6 (MT-ND6), found in Squalus acanthias (Spiny dogfish).